The following is a 122-amino-acid chain: Large ribosomal subunit protein uL14c (122 aa).

The protein belongs to the universal ribosomal protein uL14 family. In terms of assembly, part of the 50S ribosomal subunit.

It is found in the plastid. The protein localises to the chloroplast. In terms of biological role, binds to 23S rRNA. This chain is Large ribosomal subunit protein uL14c, found in Guizotia abyssinica (Niger).